The following is a 530-amino-acid chain: MSGSNGPTDTHTYQSLAEDCPFGSVEQPKRSTGRLVMHSMAMFGREFCYAVEAAYVTPVLLSVGLPKSLYSMVWLLSPILGFLLQPVVGSASDHCRARWGRRRPYILTLAIMMLLGMALYLNGDAVVSALVANPRQKLIWAISITMVGVVLFDFSADFIDGPIKAYLFDVCSHQDKEKGLHYHALFTGFGGALGYILGAIDWVHLDLGRLLGTEFQVMFFFSALVLILCFITHLCSIPEAPLRDAATDPPSQQDPQGSSLSASGMHEYGSIEKVKNGGADTEQPVQEWKNKKPSGQSQRTMSMKSLLRALVNMPSHYRCLCVSHLIGWTAFLSNMLFFTDFMGQIVYHGDPYGAHNSTEFLIYERGVEVGCWGLCINSVFSSVYSYFQKAMVSYIGLKGLYFMGYLLFGLGTGFIGLFPNVYSTLVLCSMFGVMSSTLYTVPFNLIAEYHREEEKEKGQEAPGGPDNQGRGKGVDCAALTCMVQLAQILVGGGLGFLVNMAGSVVVVVITASAVSLIGCCFVALFVRYVD.

Over 1-45 the chain is Cytoplasmic; the sequence is MSGSNGPTDTHTYQSLAEDCPFGSVEQPKRSTGRLVMHSMAMFGR. A helical membrane pass occupies residues 46–66; the sequence is EFCYAVEAAYVTPVLLSVGLP. Topologically, residues 67–68 are extracellular; sequence KS. A helical membrane pass occupies residues 69 to 89; it reads LYSMVWLLSPILGFLLQPVVG. Topologically, residues 90 to 105 are cytoplasmic; it reads SASDHCRARWGRRRPY. Residues 106–126 traverse the membrane as a helical segment; it reads ILTLAIMMLLGMALYLNGDAV. Topologically, residues 127-138 are extracellular; it reads VSALVANPRQKL. Residues 139 to 159 form a helical membrane-spanning segment; the sequence is IWAISITMVGVVLFDFSADFI. The Cytoplasmic segment spans residues 160-184; it reads DGPIKAYLFDVCSHQDKEKGLHYHA. The chain crosses the membrane as a helical span at residues 185–205; that stretch reads LFTGFGGALGYILGAIDWVHL. The Extracellular segment spans residues 206-216; that stretch reads DLGRLLGTEFQ. The chain crosses the membrane as a helical span at residues 217–237; the sequence is VMFFFSALVLILCFITHLCSI. Over 238 to 318 the chain is Cytoplasmic; that stretch reads PEAPLRDAAT…ALVNMPSHYR (81 aa). A disordered region spans residues 275–299; the sequence is KNGGADTEQPVQEWKNKKPSGQSQR. Residues 319–339 form a helical membrane-spanning segment; that stretch reads CLCVSHLIGWTAFLSNMLFFT. Over 340-366 the chain is Extracellular; it reads DFMGQIVYHGDPYGAHNSTEFLIYERG. N-linked (GlcNAc...) asparagine glycosylation occurs at N356. A helical transmembrane segment spans residues 367–387; the sequence is VEVGCWGLCINSVFSSVYSYF. Residues 388-398 lie on the Cytoplasmic side of the membrane; that stretch reads QKAMVSYIGLK. Residues 399–419 form a helical membrane-spanning segment; it reads GLYFMGYLLFGLGTGFIGLFP. Over 420-425 the chain is Extracellular; sequence NVYSTL. Residues 426-446 traverse the membrane as a helical segment; that stretch reads VLCSMFGVMSSTLYTVPFNLI. Over 447-477 the chain is Cytoplasmic; sequence AEYHREEEKEKGQEAPGGPDNQGRGKGVDCA. Residues 478 to 498 traverse the membrane as a helical segment; sequence ALTCMVQLAQILVGGGLGFLV. Residues 499–504 lie on the Extracellular side of the membrane; that stretch reads NMAGSV. A helical transmembrane segment spans residues 505–525; the sequence is VVVVITASAVSLIGCCFVALF. Residues 526–530 are Cytoplasmic-facing; it reads VRYVD.

It belongs to the glycoside-pentoside-hexuronide (GPH) cation symporter transporter (TC 2.A.2) family. Interacts with TYRP1. In terms of tissue distribution, mainly expressed in eyeballs and skin melanocytes. Also detected in kidney, colon, gall bladder and pancreas.

The protein resides in the melanosome membrane. The catalysed reaction is sucrose(out) + H(+)(out) = sucrose(in) + H(+)(in). It carries out the reaction D-glucose(out) + H(+)(out) = D-glucose(in) + H(+)(in). Functionally, proton-associated glucose and sucrose transporter. May be able to transport also fructose. Expressed at a late melanosome maturation stage where functions as a proton/glucose exporter which increase lumenal pH by decreasing glycolysis. Regulates melanogenesis by maintaining melanosome neutralization that is initially initiated by transient OCA2 and required for a proper function of the tyrosinase TYR. The sequence is that of Membrane-associated transporter protein (Slc45a2) from Mus musculus (Mouse).